The sequence spans 284 residues: RAD52 motif-containing protein 1 (284 aa).

Residues 1–92 (MAELVPFAVP…KQLFQKSPVK (92 aa)) are necessary for nuclear localization and for nucleolar accumulation in response to heat shock. The RRM domain occupies 15 to 98 (KTLLVWELSS…SPVKVRLGTR (84 aa)). The interval 90–133 (PVKVRLGTRHKAVQHQALALNSSRCQELANYYFGFNGWSKRIIK) is necessary for nuclear and nucleolar localization.

As to quaternary structure, homodimer.

The protein localises to the nucleus. The protein resides in the cytoplasm. It is found in the nucleolus. It localises to the cajal body. Its subcellular location is the PML body. Its function is as follows. May confer resistance to the antitumor agent cisplatin. Binds to DNA and RNA. The sequence is that of RAD52 motif-containing protein 1 (RDM1) from Macaca fascicularis (Crab-eating macaque).